The sequence spans 400 residues: Acetate kinase (400 aa).

Asn-10 serves as a coordination point for Mg(2+). Lys-17 is an ATP binding site. Arg-91 serves as a coordination point for substrate. Catalysis depends on Asp-150, which acts as the Proton donor/acceptor. ATP is bound by residues 210-214, 285-287, and 333-337; these read HLGNG, DCR, and GIGEN. Glu-387 provides a ligand contact to Mg(2+).

This sequence belongs to the acetokinase family. Homodimer. Mg(2+) serves as cofactor. It depends on Mn(2+) as a cofactor.

It is found in the cytoplasm. It carries out the reaction acetate + ATP = acetyl phosphate + ADP. It functions in the pathway metabolic intermediate biosynthesis; acetyl-CoA biosynthesis; acetyl-CoA from acetate: step 1/2. Catalyzes the formation of acetyl phosphate from acetate and ATP. Can also catalyze the reverse reaction. In Yersinia pseudotuberculosis serotype IB (strain PB1/+), this protein is Acetate kinase.